Consider the following 410-residue polypeptide: uncharacterized protein (410 aa).

12 helical membrane passes run Ile-27–Ile-47, Ser-63–Leu-83, Leu-97–Val-117, Leu-118–Ile-138, Asn-145–Gly-165, Ile-180–Leu-200, Val-228–Asn-248, Leu-254–Leu-274, Asn-293–Asn-313, Phe-316–Ser-332, Tyr-355–Phe-375, and Gln-378–Phe-398.

It belongs to the major facilitator superfamily.

The protein resides in the cell membrane. This is an uncharacterized protein from Buchnera aphidicola subsp. Acyrthosiphon pisum (strain APS) (Acyrthosiphon pisum symbiotic bacterium).